Reading from the N-terminus, the 282-residue chain is Reaction center protein L chain (282 aa).

3 helical membrane passes run G33–M56, G85–G113, and F116–G141. (7R,8Z)-bacteriochlorophyll b-binding residues include H154 and H174. Residues N171–N200 traverse the membrane as a helical segment. H191 lines the Fe cation pocket. Position 217 (F217) interacts with a ubiquinone. The chain crosses the membrane as a helical span at residues G226 to S252. A Fe cation-binding site is contributed by H231.

Belongs to the reaction center PufL/M/PsbA/D family. As to quaternary structure, reaction center is composed of four bacteriochlorophylls, two bacteriopheophytins, two ubiquinones, one iron, and three highly hydrophobic polypeptide chains (designated L, M, and H).

It is found in the cellular chromatophore membrane. Functionally, the reaction center is a membrane-bound complex that mediates the initial photochemical event in the electron transfer process of photosynthesis. This Rhodobacter capsulatus (Rhodopseudomonas capsulata) protein is Reaction center protein L chain (pufL).